Reading from the N-terminus, the 448-residue chain is Beta-alanine--pyruvate aminotransferase (448 aa).

Trp61 contributes to the substrate binding site. 120 to 121 (GS) contributes to the pyridoxal 5'-phosphate binding site. Lys288 carries the N6-(pyridoxal phosphate)lysine modification. Thr327 is a pyridoxal 5'-phosphate binding site. Residues Arg414 and Gln421 each contribute to the substrate site.

The protein belongs to the class-III pyridoxal-phosphate-dependent aminotransferase family. As to quaternary structure, homotetramer. The cofactor is pyridoxal 5'-phosphate.

It carries out the reaction 3-oxopropanoate + L-alanine = beta-alanine + pyruvate. Its activity is regulated as follows. Inhibited by gabaculine (5-amino-1,3-cyclohexadienylcarboxylic acid). In terms of biological role, involved in the degradation of beta-alanine. Catalyzes the transfer of the amino group from beta-alanine to pyruvate to yield L-alanine and 3-oxopropanoate. It can also accept both 4-aminobutyrate and (S)-alpha-methylbenzylamine (MBA) as amino-group donors in the presence of pyruvate as an amine acceptor. The chain is Beta-alanine--pyruvate aminotransferase (bauA) from Pseudomonas aeruginosa (strain ATCC 15692 / DSM 22644 / CIP 104116 / JCM 14847 / LMG 12228 / 1C / PRS 101 / PAO1).